The following is a 93-amino-acid chain: Cobalt transport protein CbiN (93 aa).

Transmembrane regions (helical) follow at residues 5 to 25 (LMLL…NHGG) and 63 to 83 (LLFT…LGYC).

Belongs to the CbiN family. Forms an energy-coupling factor (ECF) transporter complex composed of an ATP-binding protein (A component, CbiO), a transmembrane protein (T component, CbiQ) and 2 possible substrate-capture proteins (S components, CbiM and CbiN) of unknown stoichimetry.

The protein resides in the cell inner membrane. Its pathway is cofactor biosynthesis; adenosylcobalamin biosynthesis. Its function is as follows. Part of the energy-coupling factor (ECF) transporter complex CbiMNOQ involved in cobalt import. The chain is Cobalt transport protein CbiN from Salmonella choleraesuis (strain SC-B67).